Reading from the N-terminus, the 177-residue chain is MEDKEEKKAPSVIDRYFTRWYRTDLKGKPCEDHCILQHSNRICVITLAESHPIFQNGRKIKNINYQISDGCSRLKNKVSGKSKRGGQFLTEFAPLCRITCTDEQEFTIFSCIRGRLLEVNEVILNKPDLLMEKPSTEGYIAVILPKFEESKSVTEGLLTREQYEEILTKRNQQEVPC.

This sequence belongs to the ABITRAM family.

Its subcellular location is the nucleus speckle. It is found in the cell projection. The protein resides in the lamellipodium. The protein localises to the nucleus. It localises to the growth cone. Its subcellular location is the dendrite. In terms of biological role, may regulate actin polymerization, filopodia dynamics and arborization of neurons. The polypeptide is Protein Abitram (abitram) (Danio rerio (Zebrafish)).